The sequence spans 121 residues: Secretin (121 aa).

Positions 1–18 (MAPRPLLLLLLLLGGSAA) are cleaved as a signal peptide. A propeptide spanning residues 19-26 (RPAPPRAR) is cleaved from the precursor. At valine 54 the chain carries Valine amide. The residue at position 58 (serine 58) is a Phosphoserine. Residues 58 to 121 (SEQDAENSMA…AAAEGTLRPR (64 aa)) constitute a propeptide that is removed on maturation.

This sequence belongs to the glucagon family.

The protein resides in the secreted. Its function is as follows. Hormone involved in different processes, such as regulation of the pH of the duodenal content, food intake and water homeostasis. Exerts its biological effects by binding to secretin receptor (SCTR), a G-protein coupled receptor expressed in the basolateral domain of several cells. Acts as a key gastrointestinal hormone by regulating the pH of the duodenal content. Secreted by S cells of the duodenum in the crypts of Lieberkuehn and regulates the pH of the duodenum by (1) inhibiting the secretion of gastric acid from the parietal cells of the stomach and (2) stimulating the production of bicarbonate (NaHCO(3)) from the ductal cells of the pancreas. Production of bicarbonate is essential to neutralize the pH and ensure no damage is done to the small intestine by the gastric acid. In addition to regulating the pH of the duodenal content, plays a central role in diet induced thermogenesis: acts as a non-sympathetic brown fat (BAT) activator mediating prandial thermogenesis, which consequentially induces satiation. Mechanistically, secretin released by the gut after a meal binds to secretin receptor (SCTR) in brown adipocytes, activating brown fat thermogenesis by stimulating lipolysis, which is sensed in the brain and promotes satiation. Also able to stimulate lipolysis in white adipocytes. Also plays an important role in cellular osmoregulation: released into the systemic circulation in response to hyperosmolality and acts at different levels in the hypothalamus, pituitary and kidney to regulate water homeostasis. Also plays a role in the central nervous system, possibly by acting as a neuropeptide hormone: required for hippocampal synaptic function and neural progenitor cells maintenance. In Homo sapiens (Human), this protein is Secretin.